Reading from the N-terminus, the 536-residue chain is DNA damage-binding protein CMR1 (536 aa).

Residues 36 to 45 (REAGVDDTHR) are compositionally biased toward basic and acidic residues. The interval 36–72 (REAGVDDTHRTVVKKKKSPSVSRGRSASPKVAPVATR) is disordered. 6 WD repeats span residues 195 to 236 (LVYE…LSEN), 251 to 291 (FFTK…SNDI), 346 to 386 (LSDK…KKPE), 403 to 442 (DSRL…LPDD), 456 to 495 (GRWT…LAHL), and 496 to 535 (PTAT…KEEE).

Belongs to the WD repeat DDB2/WDR76 family.

In terms of biological role, DNA-binding protein that binds to both single- and double-stranded DNA. Binds preferentially to UV-damaged DNA. May be involved in DNA-metabolic processes. The sequence is that of DNA damage-binding protein CMR1 from Vanderwaltozyma polyspora (strain ATCC 22028 / DSM 70294 / BCRC 21397 / CBS 2163 / NBRC 10782 / NRRL Y-8283 / UCD 57-17) (Kluyveromyces polysporus).